The primary structure comprises 367 residues: MTPEQLPIEHYEDQLAEKVTRLTTMMSAFNAPEVEVFRSAVSHYRMRAEFRIWHEGDDLYHIIFDQQTRERIRVDSFPAASELINRLMPRLIEKIRDQRLLRFKLFQVDYLSTVSGQIVVSMLYHRKLDEEWQQAAAALRDSLRAEGFDLHLIGRATKTKICLDQDYVDERLTVDGREMVYRQVENSFTQPNAAVNVKMLEWALDSTRHSAGDLLELYCGNGNFSLALARNFNRVLATEIAKPSVASAQYNIAVNQIDNVQIIRMAAEEFTQAMNGERSFRRLEGIDLTRYQCETIFVDPPRSGLDDETVKMVQAYPRILYISCNPQTLCENLTALSTTHDVTRLALFDQFPYTHHMECGVLLTRRH.

S-adenosyl-L-methionine is bound by residues Gln-190, Tyr-218, Asn-223, Glu-239, and Asp-299. Cys-324 functions as the Nucleophile in the catalytic mechanism. Glu-358 functions as the Proton acceptor in the catalytic mechanism.

Belongs to the class I-like SAM-binding methyltransferase superfamily. RNA M5U methyltransferase family. TrmA subfamily.

It catalyses the reaction uridine(54) in tRNA + S-adenosyl-L-methionine = 5-methyluridine(54) in tRNA + S-adenosyl-L-homocysteine + H(+). The catalysed reaction is uridine(341) in tmRNA + S-adenosyl-L-methionine = 5-methyluridine(341) in tmRNA + S-adenosyl-L-homocysteine + H(+). In terms of biological role, dual-specificity methyltransferase that catalyzes the formation of 5-methyluridine at position 54 (m5U54) in all tRNAs, and that of position 341 (m5U341) in tmRNA (transfer-mRNA). This Erwinia tasmaniensis (strain DSM 17950 / CFBP 7177 / CIP 109463 / NCPPB 4357 / Et1/99) protein is tRNA/tmRNA (uracil-C(5))-methyltransferase.